We begin with the raw amino-acid sequence, 1714 residues long: Intersectin-1 (1714 aa).

An EH 1 domain is found at 21 to 109; that stretch reads ERAKHDQQFL…PVMKQQPVAI (89 aa). An EF-hand 1 domain is found at 53–88; it reads LPQPVLAQIWALADMNNDGRMDQVEFSIAMKLIKLK. Ca(2+) contacts are provided by Asp-66, Asn-68, Asp-70, Arg-72, and Glu-77. Residue Ser-203 is modified to Phosphoserine. Positions 221–310 constitute an EH 2 domain; it reads SRLKYRQLFN…PEYIPPSFRR (90 aa). The EF-hand 2 domain maps to 254 to 289; the sequence is LPQAQLASIWNLSDIDQDGKLTAEEFILAMHLIDVA. Positions 267, 269, 271, 273, and 278 each coordinate Ca(2+). Residues 310–325 show a composition bias toward low complexity; that stretch reads RVRSGSGMSVISSSSV. Disordered stretches follow at residues 310–356 and 614–706; these read RVRS…KREN and SKQQ…QSRL. 3 positions are modified to phosphoserine: Ser-318, Ser-334, and Ser-335. The interval 326–702 is KLERQ; the sequence is DQRLPEEPSS…ERAKPEMQDK (377 aa). Basic and acidic residues-rich tracts occupy residues 340–356 and 622–706; these read QPEK…KREN and RSLE…QSRL. Residues 354–658 adopt a coiled-coil conformation; sequence RENFERGSVE…QRRVQERDKQ (305 aa). Phosphoserine is present on Ser-685. Residues 738-799 enclose the SH3 1 domain; that stretch reads VKVVYYRALY…PANYAEKIPE (62 aa). The disordered stretch occupies residues 827 to 863; sequence APLPVTSSEPSTTPNNWADFSSTWPSSSNEKPETDNW. Positions 831 to 855 are enriched in polar residues; that stretch reads VTSSEPSTTPNNWADFSSTWPSSSN. Position 890 is a phosphothreonine (Thr-890). Phosphoserine is present on residues Ser-894, Ser-895, and Ser-897. The SH3 2 domain maps to 906 to 964; sequence VEGLQAQALYPWRAKKDNHLNFNKSDVITVLEQQDMWWFGEVQGQKGWFPKSYVKLISG. Ser-971 carries the post-translational modification Phosphoserine. Thr-977 carries the phosphothreonine modification. Phosphoserine is present on residues Ser-979 and Ser-988. 2 SH3 domains span residues 995 to 1053 and 1067 to 1131; these read IPGE…LKDS and KKPE…LLSP. The segment at 1067–1131 is required for interaction with FCHSD2; it reads KKPEIAQVIA…PANYVKLLSP (65 aa). Positions 1097–1120 match the Bipartite nuclear localization signal; in isoform 2 motif; it reads RKKNPGGWWEGELQARGKKRQIGW. Ser-1130 is subject to Phosphoserine. Residue Thr-1137 is modified to Phosphothreonine. The region spanning 1148 to 1207 is the SH3 5 domain; it reads PAVCQVIGMYDYTAQNDDELAFSKGQIINVLNKEDPDWWKGEVSGQVGLFPSNYVKLTTD. The 187-residue stretch at 1230 to 1416 folds into the DH domain; sequence KRQGYIHELI…EELCSQVNEG (187 aa). A PH domain is found at 1455–1564; that stretch reads KFLHSGKLYK…WVQKIKAASE (110 aa). One can recognise a C2 domain in the interval 1572–1688; that stretch reads KKREKAYLVR…KKDQGSKGPV (117 aa). Position 1638 is a phosphoserine (Ser-1638). Residues Asp-1660, Ser-1663, and Asp-1666 each contribute to the Ca(2+) site.

As to quaternary structure, interacts (via DH domain) with CDC42. Interacts (via SH3 domain 1) with WASL. Interacts with dynamin, SNAP25 and SNAP23. Interacts with clathrin-associated proteins and other components of the endocytic machinery, such as SPIN90, EPS15, EPN1, EPN2, STON2, FCHO1, FCHO2 and DAB2. Interacts (via SH3 domains) with REPS1 and SGIP1. Interacts with ARHGAP31. Interacts with ADAM15. Interacts with PRRT2. Interacts (via SH3 domain 4) with FCHSD2 (via SH3 domain 2). Interacts (via SH3 domain 1) with DENND2B. Interacts (via SH3 domains) with CBL. Isoform 2: Interacts with CBL and DNM1. Isoform 2: Interacts with LMNA. Isoform 2: Interacts with importin subunit KPNA1; this is likely to mediate its import into the nucleus. Interacts with DNM2. It depends on Ca(2+) as a cofactor. Detected in brain, adrenal gland and heart. Detected in neurons at the calyx of Held (at protein level). Isoform 1: Primarily detected in brain neurons. Isoform 2: Primarily detected in glia (at protein level). Widely expressed. Expressed at high levels in brain, heart and skeletal muscle.

The protein localises to the endomembrane system. It is found in the synapse. The protein resides in the synaptosome. It localises to the cell projection. Its subcellular location is the lamellipodium. The protein localises to the cell membrane. It is found in the membrane. The protein resides in the clathrin-coated pit. It localises to the recycling endosome. Its subcellular location is the endosome. The protein localises to the cytoplasmic vesicle. It is found in the cytoplasm. The protein resides in the nucleus envelope. Adapter protein that provides a link between the endocytic membrane traffic and the actin assembly machinery. Acts as a guanine nucleotide exchange factor (GEF) for CDC42, and thereby stimulates actin nucleation mediated by WASL and the ARP2/3 complex. Plays a role in the assembly and maturation of clathrin-coated vesicles. Recruits FCHSD2 to clathrin-coated pits. Involved in endocytosis of activated EGFR, and probably also other growth factor receptors. Involved in endocytosis of integrin beta-1 (ITGB1) and transferrin receptor (TFR); internalization of ITGB1 as DAB2-dependent cargo but not TFR may involve association with DAB2. Promotes ubiquitination and subsequent degradation of EGFR, and thereby contributes to the down-regulation of EGFR-dependent signaling pathways. In chromaffin cells, required for normal exocytosis of catecholamines. Required for rapid replenishment of release-ready synaptic vesicles at presynaptic active zones. Inhibits ARHGAP31 activity toward RAC1. Functionally, plays a role in synaptic vesicle endocytosis in brain neurons. The protein is Intersectin-1 of Mus musculus (Mouse).